Here is a 175-residue protein sequence, read N- to C-terminus: ATP synthase subunit b, chloroplastic (175 aa).

A helical transmembrane segment spans residues 22–42 (VFETNIINLAAVVGIVVSFVG).

It belongs to the ATPase B chain family. In terms of assembly, F-type ATPases have 2 components, F(1) - the catalytic core - and F(0) - the membrane proton channel. F(1) has five subunits: alpha(3), beta(3), gamma(1), delta(1), epsilon(1). F(0) has four main subunits: a(1), b(1), b'(1) and c(10-14). The alpha and beta chains form an alternating ring which encloses part of the gamma chain. F(1) is attached to F(0) by a central stalk formed by the gamma and epsilon chains, while a peripheral stalk is formed by the delta, b and b' chains.

It localises to the plastid. The protein localises to the chloroplast thylakoid membrane. Functionally, f(1)F(0) ATP synthase produces ATP from ADP in the presence of a proton or sodium gradient. F-type ATPases consist of two structural domains, F(1) containing the extramembraneous catalytic core and F(0) containing the membrane proton channel, linked together by a central stalk and a peripheral stalk. During catalysis, ATP synthesis in the catalytic domain of F(1) is coupled via a rotary mechanism of the central stalk subunits to proton translocation. Component of the F(0) channel, it forms part of the peripheral stalk, linking F(1) to F(0). In Chlamydomonas reinhardtii (Chlamydomonas smithii), this protein is ATP synthase subunit b, chloroplastic.